The primary structure comprises 187 residues: Ribosome-recycling factor (187 aa).

This sequence belongs to the RRF family.

The protein localises to the cytoplasm. Functionally, responsible for the release of ribosomes from messenger RNA at the termination of protein biosynthesis. May increase the efficiency of translation by recycling ribosomes from one round of translation to another. This Rhodopseudomonas palustris (strain BisB5) protein is Ribosome-recycling factor.